We begin with the raw amino-acid sequence, 716 residues long: Fatty acid oxidation complex subunit alpha (716 aa).

Residues 1-188 (MIYQSPTIQV…KVGAIDAVVA (188 aa)) are enoyl-CoA hydratase/isomerase. Asp-295 contacts substrate. The tract at residues 310–716 (KDIKHAAVLG…SNNGSYYPKA (407 aa)) is 3-hydroxyacyl-CoA dehydrogenase. NAD(+) is bound by residues Met-323, Asp-342, 399–401 (VVE), Lys-406, and Ser-428. The active-site For 3-hydroxyacyl-CoA dehydrogenase activity is His-449. Asn-452 is a binding site for NAD(+). The substrate site is built by Asn-499 and Tyr-659.

The protein in the N-terminal section; belongs to the enoyl-CoA hydratase/isomerase family. In the C-terminal section; belongs to the 3-hydroxyacyl-CoA dehydrogenase family. In terms of assembly, heterotetramer of two alpha chains (FadB) and two beta chains (FadA).

It carries out the reaction a (3S)-3-hydroxyacyl-CoA + NAD(+) = a 3-oxoacyl-CoA + NADH + H(+). The catalysed reaction is a (3S)-3-hydroxyacyl-CoA = a (2E)-enoyl-CoA + H2O. The enzyme catalyses a 4-saturated-(3S)-3-hydroxyacyl-CoA = a (3E)-enoyl-CoA + H2O. It catalyses the reaction (3S)-3-hydroxybutanoyl-CoA = (3R)-3-hydroxybutanoyl-CoA. It carries out the reaction a (3Z)-enoyl-CoA = a 4-saturated (2E)-enoyl-CoA. The catalysed reaction is a (3E)-enoyl-CoA = a 4-saturated (2E)-enoyl-CoA. Its pathway is lipid metabolism; fatty acid beta-oxidation. Involved in the aerobic and anaerobic degradation of long-chain fatty acids via beta-oxidation cycle. Catalyzes the formation of 3-oxoacyl-CoA from enoyl-CoA via L-3-hydroxyacyl-CoA. It can also use D-3-hydroxyacyl-CoA and cis-3-enoyl-CoA as substrate. This Shewanella amazonensis (strain ATCC BAA-1098 / SB2B) protein is Fatty acid oxidation complex subunit alpha.